Reading from the N-terminus, the 1413-residue chain is DNA-directed RNA polymerase subunit beta' (1413 aa).

Zn(2+) is bound by residues C72, C74, C87, and C90. Residues D463, D465, and D467 each coordinate Mg(2+). Residues C811, C885, C892, and C895 each coordinate Zn(2+).

It belongs to the RNA polymerase beta' chain family. In terms of assembly, the RNAP catalytic core consists of 2 alpha, 1 beta, 1 beta' and 1 omega subunit. When a sigma factor is associated with the core the holoenzyme is formed, which can initiate transcription. Requires Mg(2+) as cofactor. The cofactor is Zn(2+).

It catalyses the reaction RNA(n) + a ribonucleoside 5'-triphosphate = RNA(n+1) + diphosphate. DNA-dependent RNA polymerase catalyzes the transcription of DNA into RNA using the four ribonucleoside triphosphates as substrates. The protein is DNA-directed RNA polymerase subunit beta' of Ruegeria pomeroyi (strain ATCC 700808 / DSM 15171 / DSS-3) (Silicibacter pomeroyi).